We begin with the raw amino-acid sequence, 442 residues long: D-serine dehydratase (442 aa).

Lys-118 is modified (N6-(pyridoxal phosphate)lysine).

The protein belongs to the serine/threonine dehydratase family. DsdA subfamily. Monomer. The cofactor is pyridoxal 5'-phosphate.

The enzyme catalyses D-serine = pyruvate + NH4(+). The sequence is that of D-serine dehydratase from Shigella sonnei (strain Ss046).